The chain runs to 593 residues: V-type ATP synthase alpha chain (593 aa).

246–253 (GPFGAGKT) lines the ATP pocket.

It belongs to the ATPase alpha/beta chains family.

The enzyme catalyses ATP + H2O + 4 H(+)(in) = ADP + phosphate + 5 H(+)(out). Functionally, produces ATP from ADP in the presence of a proton gradient across the membrane. The V-type alpha chain is a catalytic subunit. This is V-type ATP synthase alpha chain from Protochlamydia amoebophila (strain UWE25).